The chain runs to 788 residues: Endonuclease MutS2 (788 aa).

332–339 is an ATP binding site; it reads GPNTGGKT. Positions 713 to 788 constitute a Smr domain; the sequence is VDLRGMDAEE…GTGVTVVEIK (76 aa).

This sequence belongs to the DNA mismatch repair MutS family. MutS2 subfamily. In terms of assembly, homodimer. Binds to stalled ribosomes, contacting rRNA.

Its function is as follows. Endonuclease that is involved in the suppression of homologous recombination and thus may have a key role in the control of bacterial genetic diversity. Acts as a ribosome collision sensor, splitting the ribosome into its 2 subunits. Detects stalled/collided 70S ribosomes which it binds and splits by an ATP-hydrolysis driven conformational change. Acts upstream of the ribosome quality control system (RQC), a ribosome-associated complex that mediates the extraction of incompletely synthesized nascent chains from stalled ribosomes and their subsequent degradation. Probably generates substrates for RQC. The protein is Endonuclease MutS2 of Clostridium botulinum (strain Loch Maree / Type A3).